A 599-amino-acid chain; its full sequence is Sulfite reductase [NADPH] flavoprotein alpha-component (599 aa).

The 139-residue stretch at 64-202 folds into the Flavodoxin-like domain; that stretch reads VTLISASQTG…AASEWRARVV (139 aa). Residues 70–75, 117–120, and 153–162 contribute to the FMN site; these read SQTGNA, STQG, and LGDTSYEFFC. The region spanning 234–448 is the FAD-binding FR-type domain; sequence DAPLTATLSV…IEHNDNFRLP (215 aa). FAD-binding positions include T322, A356, 386-389, 404-406, Y410, and 419-422; these read RLYS, TVG, and GGAS. NADP(+) is bound by residues 519 to 520, 525 to 529, and D561; these read SR and KIYVQ. Y599 is a binding site for FAD.

It belongs to the NADPH-dependent sulphite reductase flavoprotein subunit CysJ family. This sequence in the N-terminal section; belongs to the flavodoxin family. The protein in the C-terminal section; belongs to the flavoprotein pyridine nucleotide cytochrome reductase family. As to quaternary structure, alpha(8)-beta(8). The alpha component is a flavoprotein, the beta component is a hemoprotein. FAD is required as a cofactor. It depends on FMN as a cofactor.

It catalyses the reaction hydrogen sulfide + 3 NADP(+) + 3 H2O = sulfite + 3 NADPH + 4 H(+). The protein operates within sulfur metabolism; hydrogen sulfide biosynthesis; hydrogen sulfide from sulfite (NADPH route): step 1/1. Its function is as follows. Component of the sulfite reductase complex that catalyzes the 6-electron reduction of sulfite to sulfide. This is one of several activities required for the biosynthesis of L-cysteine from sulfate. The flavoprotein component catalyzes the electron flow from NADPH -&gt; FAD -&gt; FMN to the hemoprotein component. This chain is Sulfite reductase [NADPH] flavoprotein alpha-component, found in Salmonella paratyphi A (strain ATCC 9150 / SARB42).